The primary structure comprises 535 residues: Tetrathionate hydrolase (535 aa).

Positions 1–39 (MNLKILVGLFILGIIILSAMTFLNFTTIVAQDKGDQQPK) are cleaved as a signal peptide. N-linked (GlcNAc...) asparagine glycosylation is present at N50.

It belongs to the tetrathionate hydrolase family. In terms of assembly, monomer and homodimer; in equilibrium.

Its subcellular location is the cell surface. It carries out the reaction tetrathionate + H2O = sulfur + thiosulfate + sulfate + H(+). Functionally, catalyzes the hydrolysis of tetrathionate to generate elemental sulfur, thiosulfate and sulfate. The sequence is that of Tetrathionate hydrolase from Acidianus ambivalens (Desulfurolobus ambivalens).